Reading from the N-terminus, the 286-residue chain is Polyamine aminopropyltransferase (286 aa).

Residues 5–238 (TMWHETLHDQ…GIMTFAWATN (234 aa)) form the PABS domain. Residue Gln-33 coordinates S-methyl-5'-thioadenosine. 2 residues coordinate spermidine: His-64 and Asp-88. S-methyl-5'-thioadenosine is bound by residues Glu-108 and 140–141 (DG). The active-site Proton acceptor is the Asp-158. 158–161 (DCTD) provides a ligand contact to spermidine. Pro-165 is an S-methyl-5'-thioadenosine binding site.

This sequence belongs to the spermidine/spermine synthase family. As to quaternary structure, homodimer or homotetramer.

Its subcellular location is the cytoplasm. It carries out the reaction S-adenosyl 3-(methylsulfanyl)propylamine + putrescine = S-methyl-5'-thioadenosine + spermidine + H(+). It functions in the pathway amine and polyamine biosynthesis; spermidine biosynthesis; spermidine from putrescine: step 1/1. Its function is as follows. Catalyzes the irreversible transfer of a propylamine group from the amino donor S-adenosylmethioninamine (decarboxy-AdoMet) to putrescine (1,4-diaminobutane) to yield spermidine. This chain is Polyamine aminopropyltransferase, found in Salmonella paratyphi B (strain ATCC BAA-1250 / SPB7).